A 298-amino-acid polypeptide reads, in one-letter code: Acetylglutamate kinase (298 aa).

Substrate is bound by residues 69 to 70 (GG), Arg-91, and Asn-196.

The protein belongs to the acetylglutamate kinase family. ArgB subfamily.

It localises to the cytoplasm. The catalysed reaction is N-acetyl-L-glutamate + ATP = N-acetyl-L-glutamyl 5-phosphate + ADP. Its pathway is amino-acid biosynthesis; L-arginine biosynthesis; N(2)-acetyl-L-ornithine from L-glutamate: step 2/4. Catalyzes the ATP-dependent phosphorylation of N-acetyl-L-glutamate. In Rhodopseudomonas palustris (strain BisB18), this protein is Acetylglutamate kinase.